We begin with the raw amino-acid sequence, 324 residues long: UDP-N-acetylenolpyruvoylglucosamine reductase (324 aa).

The FAD-binding PCMH-type domain maps to 36-211; it reads FRAGGLAELM…AEDKAKIRND (176 aa). The active site involves R183. S232 (proton donor) is an active-site residue. E302 is a catalytic residue.

Belongs to the MurB family. FAD is required as a cofactor.

Its subcellular location is the cytoplasm. The catalysed reaction is UDP-N-acetyl-alpha-D-muramate + NADP(+) = UDP-N-acetyl-3-O-(1-carboxyvinyl)-alpha-D-glucosamine + NADPH + H(+). It participates in cell wall biogenesis; peptidoglycan biosynthesis. In terms of biological role, cell wall formation. The sequence is that of UDP-N-acetylenolpyruvoylglucosamine reductase from Sinorhizobium medicae (strain WSM419) (Ensifer medicae).